The sequence spans 257 residues: 4-hydroxy-tetrahydrodipicolinate reductase (257 aa).

NAD(+) is bound by residues 8-13, 90-92, and 114-117; these read GSTGRV, ATT, and ATNM. Catalysis depends on His146, which acts as the Proton donor/acceptor. (S)-2,3,4,5-tetrahydrodipicolinate is bound at residue His147. The active-site Proton donor is the Lys150. Residue 156 to 157 coordinates (S)-2,3,4,5-tetrahydrodipicolinate; the sequence is GT.

It belongs to the DapB family.

The protein resides in the cytoplasm. It catalyses the reaction (S)-2,3,4,5-tetrahydrodipicolinate + NAD(+) + H2O = (2S,4S)-4-hydroxy-2,3,4,5-tetrahydrodipicolinate + NADH + H(+). The catalysed reaction is (S)-2,3,4,5-tetrahydrodipicolinate + NADP(+) + H2O = (2S,4S)-4-hydroxy-2,3,4,5-tetrahydrodipicolinate + NADPH + H(+). It participates in amino-acid biosynthesis; L-lysine biosynthesis via DAP pathway; (S)-tetrahydrodipicolinate from L-aspartate: step 4/4. Its function is as follows. Catalyzes the conversion of 4-hydroxy-tetrahydrodipicolinate (HTPA) to tetrahydrodipicolinate. The chain is 4-hydroxy-tetrahydrodipicolinate reductase from Aliarcobacter butzleri (strain RM4018) (Arcobacter butzleri).